Reading from the N-terminus, the 104-residue chain is MQTVSTETVPGHETVEALGIARGNTVEARNVGRDITQSIRNITGGELKAYSELLSKARDEALSRMEADAEEMGADAVVNVRLETSKVTDGGSEVIAYGTAVRLR.

It belongs to the UPF0145 family.

The protein is UPF0145 protein NP_2600A of Natronomonas pharaonis (strain ATCC 35678 / DSM 2160 / CIP 103997 / JCM 8858 / NBRC 14720 / NCIMB 2260 / Gabara) (Halobacterium pharaonis).